Reading from the N-terminus, the 313-residue chain is Acetyl-coenzyme A carboxylase carboxyl transferase subunit alpha (313 aa).

One can recognise a CoA carboxyltransferase C-terminal domain in the interval 36–286; it reads RLDKEVKTIY…KEYFLDTLRT (251 aa).

This sequence belongs to the AccA family. In terms of assembly, acetyl-CoA carboxylase is a heterohexamer composed of biotin carboxyl carrier protein (AccB), biotin carboxylase (AccC) and two subunits each of ACCase subunit alpha (AccA) and ACCase subunit beta (AccD).

Its subcellular location is the cytoplasm. It carries out the reaction N(6)-carboxybiotinyl-L-lysyl-[protein] + acetyl-CoA = N(6)-biotinyl-L-lysyl-[protein] + malonyl-CoA. It participates in lipid metabolism; malonyl-CoA biosynthesis; malonyl-CoA from acetyl-CoA: step 1/1. Its function is as follows. Component of the acetyl coenzyme A carboxylase (ACC) complex. First, biotin carboxylase catalyzes the carboxylation of biotin on its carrier protein (BCCP) and then the CO(2) group is transferred by the carboxyltransferase to acetyl-CoA to form malonyl-CoA. In Helicobacter acinonychis (strain Sheeba), this protein is Acetyl-coenzyme A carboxylase carboxyl transferase subunit alpha.